The primary structure comprises 569 residues: Matrix metalloproteinase-21 (569 aa).

Positions 1-24 (MLAASIFRPTLLLCWLAAPWPTQP) are cleaved as a signal peptide. Positions 25–144 (ESLFHSRDRS…GPPPRARSRR (120 aa)) are excised as a propeptide. A Cysteine switch motif is present at residues 115–122 (PRCGVPDM). The tract at residues 115 to 166 (PRCGVPDMRPPPPSAPPSPPGPPPRARSRRSPRAPLSLSRRGWQPRGYPDGG) is disordered. Zn(2+) is bound at residue cysteine 117. Residues 122–139 (MRPPPPSAPPSPPGPPPR) are compositionally biased toward pro residues. Residues 147 to 156 (RAPLSLSRRG) are compositionally biased toward low complexity. Histidine 283 provides a ligand contact to Zn(2+). Glutamate 284 is an active-site residue. Residues histidine 287 and histidine 293 each coordinate Zn(2+). Cysteines 329 and 560 form a disulfide. Hemopexin repeat units follow at residues 330 to 389 (EGSF…WPGI), 391 to 447 (THNI…FPGI), 448 to 496 (PSPL…FPAV), and 503 to 559 (FRNI…WFDV). Asparagine 372 carries an N-linked (GlcNAc...) asparagine glycan.

Belongs to the peptidase M10A family. Zn(2+) is required as a cofactor. The cofactor is Ca(2+). Post-translationally, the precursor is cleaved by a furin endopeptidase. In terms of tissue distribution, identified in fetal brain, kidney and liver. In adult tissues found primarily in ovary, kidney, liver, lung, placenta, brain and peripheral blood leukocytes. Expressed as well in various cancer cell lines.

Its subcellular location is the secreted. In terms of biological role, plays a specialized role in the generation of left-right asymmetry during embryogenesis. May act as a negative regulator of the NOTCH-signaling pathway. Cleaves alpha-1-antitrypsin. The protein is Matrix metalloproteinase-21 (MMP21) of Homo sapiens (Human).